The sequence spans 75 residues: Large ribosomal subunit protein bL28c (75 aa).

This sequence belongs to the bacterial ribosomal protein bL28 family.

The protein localises to the plastid. It localises to the chloroplast. The sequence is that of Large ribosomal subunit protein bL28c from Cyanidioschyzon merolae (strain NIES-3377 / 10D) (Unicellular red alga).